Consider the following 110-residue polypeptide: uncharacterized protein (110 aa).

2 helical membrane passes run 6-26 (VSLY…IYNV) and 38-58 (TSGP…IIGP).

It is found in the membrane. This is an uncharacterized protein from Saccharomyces cerevisiae (strain ATCC 204508 / S288c) (Baker's yeast).